A 461-amino-acid chain; its full sequence is Glycine--tRNA ligase (461 aa).

Substrate-binding residues include R99 and E173. Residues 205 to 207, 215 to 220, 289 to 290, and 333 to 336 each bind ATP; these read RNE, FRTREF, EL, and GADR. Residue 220 to 224 coordinates substrate; it reads FEQME. Residue 329-333 participates in substrate binding; that stretch reads EPSLG.

This sequence belongs to the class-II aminoacyl-tRNA synthetase family. As to quaternary structure, homodimer.

The protein resides in the cytoplasm. It carries out the reaction tRNA(Gly) + glycine + ATP = glycyl-tRNA(Gly) + AMP + diphosphate. Its function is as follows. Catalyzes the attachment of glycine to tRNA(Gly). This is Glycine--tRNA ligase from Lysinibacillus sphaericus (strain C3-41).